Consider the following 146-residue polypeptide: ATP synthase F(0) complex subunit C2, mitochondrial (146 aa).

The transit peptide at 1-71 (MYACSKFVST…RSFQTSAISR (71 aa)) directs the protein to the mitochondrion. The helical transmembrane segment at 87–107 (VGVAGSGAGIGTVFGSLIIGY) threads the bilayer. An N6,N6,N6-trimethyllysine modification is found at Lys114. The chain crosses the membrane as a helical span at residues 122 to 142 (ILGFALSEAMGLFCLMVAFLI).

The protein belongs to the ATPase C chain family. F-type ATPases have 2 components, CF(1) - the catalytic core - and CF(0) - the membrane proton channel. CF(1) has five subunits: alpha(3), beta(3), gamma(1), delta(1), epsilon(1). CF(0) has three main subunits: a, b and c. Interacts with DNAJC30; interaction is direct. In terms of processing, trimethylated by ATPSCKMT at Lys-114. Methylation is required for proper incorporation of the C subunit into the ATP synthase complex and mitochondrial respiration.

It localises to the mitochondrion membrane. Functionally, mitochondrial membrane ATP synthase (F(1)F(0) ATP synthase or Complex V) produces ATP from ADP in the presence of a proton gradient across the membrane which is generated by electron transport complexes of the respiratory chain. F-type ATPases consist of two structural domains, F(1) - containing the extramembraneous catalytic core and F(0) - containing the membrane proton channel, linked together by a central stalk and a peripheral stalk. During catalysis, ATP synthesis in the catalytic domain of F(1) is coupled via a rotary mechanism of the central stalk subunits to proton translocation. Part of the complex F(0) domain. A homomeric c-ring of probably 10 subunits is part of the complex rotary element. In Mus musculus (Mouse), this protein is ATP synthase F(0) complex subunit C2, mitochondrial.